We begin with the raw amino-acid sequence, 479 residues long: Pup--protein ligase (479 aa).

Mg(2+) is bound at residue glutamate 17. Residue arginine 62 participates in ATP binding. Residue tyrosine 64 participates in Mg(2+) binding. Aspartate 66 functions as the Proton acceptor in the catalytic mechanism. Glutamate 72 provides a ligand contact to Mg(2+). ATP is bound by residues serine 75 and tryptophan 432.

This sequence belongs to the Pup ligase/Pup deamidase family. Pup-conjugating enzyme subfamily.

It catalyses the reaction ATP + [prokaryotic ubiquitin-like protein]-L-glutamate + [protein]-L-lysine = ADP + phosphate + N(6)-([prokaryotic ubiquitin-like protein]-gamma-L-glutamyl)-[protein]-L-lysine.. The protein operates within protein degradation; proteasomal Pup-dependent pathway. It participates in protein modification; protein pupylation. Functionally, catalyzes the covalent attachment of the prokaryotic ubiquitin-like protein modifier Pup to the proteasomal substrate proteins, thereby targeting them for proteasomal degradation. This tagging system is termed pupylation. The ligation reaction involves the side-chain carboxylate of the C-terminal glutamate of Pup and the side-chain amino group of a substrate lysine. In Corynebacterium diphtheriae (strain ATCC 700971 / NCTC 13129 / Biotype gravis), this protein is Pup--protein ligase.